A 291-amino-acid chain; its full sequence is Tumor necrosis factor ligand superfamily member 10 (291 aa).

Over 1–17 the chain is Cytoplasmic; that stretch reads MPSSGALKDLSFSQHFR. The helical; Signal-anchor for type II membrane protein transmembrane segment at 18–38 threads the bilayer; it reads MMVICIVLLQVLLQAVSVAVT. The Extracellular portion of the chain corresponds to 39 to 291; that stretch reads YMYFTNEMKQ…ASFFGAFLIN (253 aa). Asn-52 carries an N-linked (GlcNAc...) asparagine glycan. Residues 126-290 enclose the THD domain; the sequence is VAAHITGITR…EASFFGAFLI (165 aa). Cys-240 is a binding site for Zn(2+).

It belongs to the tumor necrosis factor family. As to quaternary structure, homotrimer. One TNFSF10 homotrimer interacts with three TNFSF10A mononers. One TNFSF10 homotrimer interacts with three TNFSF10B mononers. Tyrosine phosphorylated by PKDCC/VLK. Widespread.

Its subcellular location is the cell membrane. It localises to the secreted. Its function is as follows. Cytokine that binds to TNFRSF10A/TRAILR1, TNFRSF10B/TRAILR2, TNFRSF10C/TRAILR3, TNFRSF10D/TRAILR4 and possibly also to TNFRSF11B/OPG. Induces apoptosis. Its activity may be modulated by binding to the decoy receptors TNFRSF10C/TRAILR3, TNFRSF10D/TRAILR4 and TNFRSF11B/OPG that cannot induce apoptosis. The polypeptide is Tumor necrosis factor ligand superfamily member 10 (Tnfsf10) (Mus musculus (Mouse)).